The sequence spans 347 residues: GMP reductase (347 aa).

108–131 contributes to the NADP(+) binding site; sequence ADFEKTKQILAQSPALNFVCIDVA. K(+) contacts are provided by Gly181 and Gly183. Cys186 (thioimidate intermediate) is an active-site residue. An NADP(+)-binding site is contributed by 216 to 239; it reads IVSDGGCTMPGDVAKAFGGGADFV.

This sequence belongs to the IMPDH/GMPR family. GuaC type 1 subfamily. In terms of assembly, homotetramer.

It carries out the reaction IMP + NH4(+) + NADP(+) = GMP + NADPH + 2 H(+). In terms of biological role, catalyzes the irreversible NADPH-dependent deamination of GMP to IMP. It functions in the conversion of nucleobase, nucleoside and nucleotide derivatives of G to A nucleotides, and in maintaining the intracellular balance of A and G nucleotides. In Citrobacter koseri (strain ATCC BAA-895 / CDC 4225-83 / SGSC4696), this protein is GMP reductase.